The sequence spans 130 residues: Small ribosomal subunit protein uS8 (130 aa).

This sequence belongs to the universal ribosomal protein uS8 family. As to quaternary structure, part of the 30S ribosomal subunit. Contacts proteins S5 and S12.

Its function is as follows. One of the primary rRNA binding proteins, it binds directly to 16S rRNA central domain where it helps coordinate assembly of the platform of the 30S subunit. This chain is Small ribosomal subunit protein uS8, found in Ruegeria pomeroyi (strain ATCC 700808 / DSM 15171 / DSS-3) (Silicibacter pomeroyi).